Consider the following 189-residue polypeptide: MASASPRRQDLLDALGIKYKSVPAELDEHFFPGELPRKAAERVAREKAEAVARNFEHGLILAADTIVVCDGKVLGKPQDEDDAFLMLSHLSGKSHEVITAVCIKDIDQAESEVESEVTRVYFRSLSPMEIRTYISSGEAMDKAGAYGIQGLGSVFVERIDGCYFNVVGLPISRVYGMLARRGTNILRNE.

Asp-64 functions as the Proton acceptor in the catalytic mechanism.

The protein belongs to the Maf family. YhdE subfamily. A divalent metal cation serves as cofactor.

It is found in the cytoplasm. The enzyme catalyses dTTP + H2O = dTMP + diphosphate + H(+). It carries out the reaction UTP + H2O = UMP + diphosphate + H(+). Nucleoside triphosphate pyrophosphatase that hydrolyzes dTTP and UTP. May have a dual role in cell division arrest and in preventing the incorporation of modified nucleotides into cellular nucleic acids. This Syntrophomonas wolfei subsp. wolfei (strain DSM 2245B / Goettingen) protein is dTTP/UTP pyrophosphatase.